Reading from the N-terminus, the 217-residue chain is Ribonuclease T (217 aa).

Residues 20–195 (VVVDVETAGF…YDTEKTAELF (176 aa)) form the Exonuclease domain. Mg(2+)-binding residues include D23, E25, H182, and D187. The active-site Proton donor/acceptor is H182.

It belongs to the RNase T family. As to quaternary structure, homodimer. Mg(2+) serves as cofactor.

In terms of biological role, trims short 3' overhangs of a variety of RNA species, leaving a one or two nucleotide 3' overhang. Responsible for the end-turnover of tRNA: specifically removes the terminal AMP residue from uncharged tRNA (tRNA-C-C-A). Also appears to be involved in tRNA biosynthesis. This is Ribonuclease T from Vibrio vulnificus (strain CMCP6).